The sequence spans 123 residues: Small ribosomal subunit protein uS12 (123 aa).

The interval 1–32 (MPTIQQLVRKGRKDKKAKVKTAALKGSPQRRG) is disordered. Residues 9–19 (RKGRKDKKAKV) show a composition bias toward basic residues. The residue at position 89 (aspartate 89) is a 3-methylthioaspartic acid.

Belongs to the universal ribosomal protein uS12 family. Part of the 30S ribosomal subunit. Contacts proteins S8 and S17. May interact with IF1 in the 30S initiation complex.

With S4 and S5 plays an important role in translational accuracy. In terms of biological role, interacts with and stabilizes bases of the 16S rRNA that are involved in tRNA selection in the A site and with the mRNA backbone. Located at the interface of the 30S and 50S subunits, it traverses the body of the 30S subunit contacting proteins on the other side and probably holding the rRNA structure together. The combined cluster of proteins S8, S12 and S17 appears to hold together the shoulder and platform of the 30S subunit. The chain is Small ribosomal subunit protein uS12 from Corynebacterium kroppenstedtii (strain DSM 44385 / JCM 11950 / CIP 105744 / CCUG 35717).